Here is a 510-residue protein sequence, read N- to C-terminus: Maturase K (510 aa).

The protein belongs to the intron maturase 2 family. MatK subfamily.

It is found in the plastid. Its subcellular location is the chloroplast. In terms of biological role, usually encoded in the trnK tRNA gene intron. Probably assists in splicing its own and other chloroplast group II introns. The polypeptide is Maturase K (Penstemon heterophyllus (Foothill penstemon)).